Reading from the N-terminus, the 89-residue chain is Small ribosomal subunit protein uS15 (89 aa).

The protein belongs to the universal ribosomal protein uS15 family. In terms of assembly, part of the 30S ribosomal subunit. Forms a bridge to the 50S subunit in the 70S ribosome, contacting the 23S rRNA.

Its function is as follows. One of the primary rRNA binding proteins, it binds directly to 16S rRNA where it helps nucleate assembly of the platform of the 30S subunit by binding and bridging several RNA helices of the 16S rRNA. In terms of biological role, forms an intersubunit bridge (bridge B4) with the 23S rRNA of the 50S subunit in the ribosome. This is Small ribosomal subunit protein uS15 from Agrobacterium fabrum (strain C58 / ATCC 33970) (Agrobacterium tumefaciens (strain C58)).